Here is a 600-residue protein sequence, read N- to C-terminus: DNA primase (600 aa).

Residues 38 to 62 (CPFHDEKTPSFIVYPTRGHYHCYGC) form a CHC2-type zinc finger. Positions 253–333 (KRVILVEGQA…GIAVIVCRLP (81 aa)) constitute a Toprim domain. Mg(2+) contacts are provided by Glu259, Asp304, and Asp306.

It belongs to the DnaG primase family. In terms of assembly, monomer. Interacts with DnaB. Requires Zn(2+) as cofactor. It depends on Mg(2+) as a cofactor.

It catalyses the reaction ssDNA + n NTP = ssDNA/pppN(pN)n-1 hybrid + (n-1) diphosphate.. Its function is as follows. RNA polymerase that catalyzes the synthesis of short RNA molecules used as primers for DNA polymerase during DNA replication. The polypeptide is DNA primase (Chlamydia muridarum (strain MoPn / Nigg)).